The following is a 1296-amino-acid chain: Phosphoribosylformylglycinamidine synthase (1296 aa).

A disordered region spans residues 304-323 (WPGAATGSGGEIRDEGATGR). Residues 306-317 (GAATGSGGEIRD) and Ala-677 each bind ATP. Positions 678, 717, 721, and 885 each coordinate Mg(2+). An ATP-binding site is contributed by Ser-887. Over residues 1000–1013 (PDCADQEHQAKQDE) the composition is skewed to basic and acidic residues. Residues 1000–1019 (PDCADQEHQAKQDESDPGLN) are disordered. The Glutamine amidotransferase type-1 domain occupies 1043 to 1296 (VAVLREQGVN…MFRNARKQLG (254 aa)). Cys-1136 functions as the Nucleophile in the catalytic mechanism. Catalysis depends on residues His-1261 and Glu-1263.

The protein in the N-terminal section; belongs to the FGAMS family. Monomer.

The protein resides in the cytoplasm. The catalysed reaction is N(2)-formyl-N(1)-(5-phospho-beta-D-ribosyl)glycinamide + L-glutamine + ATP + H2O = 2-formamido-N(1)-(5-O-phospho-beta-D-ribosyl)acetamidine + L-glutamate + ADP + phosphate + H(+). The protein operates within purine metabolism; IMP biosynthesis via de novo pathway; 5-amino-1-(5-phospho-D-ribosyl)imidazole from N(2)-formyl-N(1)-(5-phospho-D-ribosyl)glycinamide: step 1/2. Its function is as follows. Phosphoribosylformylglycinamidine synthase involved in the purines biosynthetic pathway. Catalyzes the ATP-dependent conversion of formylglycinamide ribonucleotide (FGAR) and glutamine to yield formylglycinamidine ribonucleotide (FGAM) and glutamate. The sequence is that of Phosphoribosylformylglycinamidine synthase from Yersinia pestis bv. Antiqua (strain Nepal516).